Consider the following 445-residue polypeptide: Phosphoglucosamine mutase (445 aa).

Serine 102 functions as the Phosphoserine intermediate in the catalytic mechanism. Residues serine 102, aspartate 241, aspartate 243, and aspartate 245 each coordinate Mg(2+). Serine 102 carries the post-translational modification Phosphoserine.

Belongs to the phosphohexose mutase family. Mg(2+) serves as cofactor. Activated by phosphorylation.

The catalysed reaction is alpha-D-glucosamine 1-phosphate = D-glucosamine 6-phosphate. Catalyzes the conversion of glucosamine-6-phosphate to glucosamine-1-phosphate. The chain is Phosphoglucosamine mutase from Novosphingobium aromaticivorans (strain ATCC 700278 / DSM 12444 / CCUG 56034 / CIP 105152 / NBRC 16084 / F199).